A 443-amino-acid chain; its full sequence is Adenylyltransferase and sulfurtransferase UBA4 (443 aa).

Residues Gly83, Asp104, 111-115 (SNLHR), Lys128, and 172-173 (DT) contribute to the ATP site. Zn(2+) contacts are provided by Cys214 and Cys217. Cys231 functions as the Glycyl thioester intermediate; for adenylyltransferase activity in the catalytic mechanism. The Zn(2+) site is built by Cys292 and Cys295. Positions 343-441 (QSKAPVLLDV…WSDIVNPKFP (99 aa)) constitute a Rhodanese domain. Cys400 functions as the Cysteine persulfide intermediate; for sulfurtransferase activity in the catalytic mechanism.

It in the N-terminal section; belongs to the HesA/MoeB/ThiF family. UBA4 subfamily. Requires Zn(2+) as cofactor.

The protein resides in the cytoplasm. It is found in the cytosol. It participates in tRNA modification; 5-methoxycarbonylmethyl-2-thiouridine-tRNA biosynthesis. Plays a central role in 2-thiolation of mcm(5)S(2)U at tRNA wobble positions of cytosolic tRNA(Lys), tRNA(Glu) and tRNA(Gln). Acts by mediating the C-terminal thiocarboxylation of sulfur carrier URM1. Its N-terminus first activates URM1 as acyl-adenylate (-COAMP), then the persulfide sulfur on the catalytic cysteine is transferred to URM1 to form thiocarboxylation (-COSH) of its C-terminus. The reaction probably involves hydrogen sulfide that is generated from the persulfide intermediate and that acts as a nucleophile towards URM1. Subsequently, a transient disulfide bond is formed. Does not use thiosulfate as sulfur donor; NFS1 probably acting as a sulfur donor for thiocarboxylation reactions. Prior mcm(5) tRNA modification by the elongator complex is required for 2-thiolation. May also be involved in protein urmylation. In Scheffersomyces stipitis (strain ATCC 58785 / CBS 6054 / NBRC 10063 / NRRL Y-11545) (Yeast), this protein is Adenylyltransferase and sulfurtransferase UBA4.